Reading from the N-terminus, the 142-residue chain is Protein archease (142 aa).

Ca(2+)-binding residues include D12 and D141.

This sequence belongs to the archease family.

Functionally, activates the tRNA-splicing ligase complex by facilitating the enzymatic turnover of catalytic subunit RtcB. Acts by promoting the guanylylation of RtcB, a key intermediate step in tRNA ligation. Can also alter the NTP specificity of RtcB such that ATP, dGTP or ITP is used efficiently. The sequence is that of Protein archease from Thermococcus kodakarensis (strain ATCC BAA-918 / JCM 12380 / KOD1) (Pyrococcus kodakaraensis (strain KOD1)).